Here is a 256-residue protein sequence, read N- to C-terminus: Hydroxyacylglutathione hydrolase (256 aa).

7 residues coordinate Zn(2+): histidine 57, histidine 59, aspartate 61, histidine 62, histidine 115, aspartate 134, and histidine 172.

The protein belongs to the metallo-beta-lactamase superfamily. Glyoxalase II family. In terms of assembly, monomer. Zn(2+) serves as cofactor.

It catalyses the reaction an S-(2-hydroxyacyl)glutathione + H2O = a 2-hydroxy carboxylate + glutathione + H(+). Its pathway is secondary metabolite metabolism; methylglyoxal degradation; (R)-lactate from methylglyoxal: step 2/2. Its function is as follows. Thiolesterase that catalyzes the hydrolysis of S-D-lactoyl-glutathione to form glutathione and D-lactic acid. This is Hydroxyacylglutathione hydrolase from Jannaschia sp. (strain CCS1).